The following is a 132-amino-acid chain: L-ectoine synthase (132 aa).

It belongs to the ectoine synthase family.

The catalysed reaction is (2S)-4-acetamido-2-aminobutanoate = L-ectoine + H2O. Its pathway is amine and polyamine biosynthesis; ectoine biosynthesis; L-ectoine from L-aspartate 4-semialdehyde: step 3/3. Its function is as follows. Catalyzes the circularization of gamma-N-acetyl-alpha,gamma-diaminobutyric acid (ADABA) to ectoine (1,4,5,6-tetrahydro-2-methyl-4-pyrimidine carboxylic acid), which is an excellent osmoprotectant. The polypeptide is L-ectoine synthase (ectC) (Streptomyces anulatus (Streptomyces chrysomallus)).